The primary structure comprises 240 residues: Adapter protein MecA (240 aa).

Basic and acidic residues predominate over residues 119-132; the sequence is QRKQQKKNHQDKQQ. Residues 119-138 form a disordered region; the sequence is QRKQQKKNHQDKQQRRAHKP.

This sequence belongs to the MecA family. As to quaternary structure, homodimer.

Its function is as follows. Enables the recognition and targeting of unfolded and aggregated proteins to the ClpC protease or to other proteins involved in proteolysis. The sequence is that of Adapter protein MecA from Staphylococcus epidermidis (strain ATCC 35984 / DSM 28319 / BCRC 17069 / CCUG 31568 / BM 3577 / RP62A).